A 246-amino-acid polypeptide reads, in one-letter code: rRNA methyltransferase 2, mitochondrial (246 aa).

The N-terminal 18 residues, 1–18, are a transit peptide targeting the mitochondrion; the sequence is MAGYLKLVCVSFQRQGFH. Residues 83-86, Asp112, 129-130, and Asp154 each bind S-adenosyl-L-methionine; these read PGAW and DV. Lys194 (proton acceptor) is an active-site residue.

Belongs to the class I-like SAM-binding methyltransferase superfamily. RNA methyltransferase RlmE family. Widely expressed, with highest expression in muscle, placenta, and heart.

Its subcellular location is the mitochondrion. It carries out the reaction uridine(1369) in 16S rRNA + S-adenosyl-L-methionine = 2'-O-methyluridine(1369) in 16S rRNA + S-adenosyl-L-homocysteine + H(+). S-adenosyl-L-methionine-dependent 2'-O-ribose methyltransferase that catalyzes the formation of 2'-O-methyluridine at position 1369 (Um1369) in the 16S mitochondrial large subunit ribosomal RNA (mtLSU rRNA), a universally conserved modification in the peptidyl transferase domain of the mtLSU rRNA. This activity may require prior 2'-O-methylguanosine modification at position 1370 (Gm1370) by MRM3. Essential for late-stage assembly of mtLSU required for efficient translation of mitochondrial DNA encoded proteins; methyltransferase activity is not required for this function. Essential for mitochondrial respiratory function. The polypeptide is rRNA methyltransferase 2, mitochondrial (Homo sapiens (Human)).